A 533-amino-acid polypeptide reads, in one-letter code: Berberine bridge enzyme-like 12 (533 aa).

The signal sequence occupies residues 1 to 20; that stretch reads MYLIFLLFFAASYSMSLSSA. Cysteine 32 and cysteine 95 are oxidised to a cystine. 6 N-linked (GlcNAc...) asparagine glycosylation sites follow: asparagine 35, asparagine 70, asparagine 133, asparagine 296, asparagine 412, and asparagine 417. Residues 73–249 form the FAD-binding PCMH-type domain; that stretch reads SMPKPSIIIV…LAFKVKLVTV (177 aa). Residues 110-174 constitute a cross-link (6-(S-cysteinyl)-8alpha-(pros-histidyl)-FAD (His-Cys)); that stretch reads HDYDGLSYVS…EVHAFPAGVC (65 aa).

This sequence belongs to the oxygen-dependent FAD-linked oxidoreductase family. The cofactor is FAD. The FAD cofactor is bound via a bicovalent 6-S-cysteinyl, 8alpha-N1-histidyl FAD linkage.

It is found in the secreted. The protein localises to the cell wall. This Arabidopsis thaliana (Mouse-ear cress) protein is Berberine bridge enzyme-like 12.